Reading from the N-terminus, the 193-residue chain is 3-isopropylmalate dehydratase small subunit (193 aa).

Belongs to the LeuD family. LeuD type 1 subfamily. In terms of assembly, heterodimer of LeuC and LeuD.

The enzyme catalyses (2R,3S)-3-isopropylmalate = (2S)-2-isopropylmalate. Its pathway is amino-acid biosynthesis; L-leucine biosynthesis; L-leucine from 3-methyl-2-oxobutanoate: step 2/4. Its function is as follows. Catalyzes the isomerization between 2-isopropylmalate and 3-isopropylmalate, via the formation of 2-isopropylmaleate. The sequence is that of 3-isopropylmalate dehydratase small subunit from Bacillus cereus (strain ATCC 10987 / NRS 248).